Consider the following 416-residue polypeptide: Glutamyl-tRNA reductase 1 (416 aa).

Substrate is bound by residues 57 to 60 (TCNR), Ser-113, 118 to 120 (DFE), and Gln-124. The active-site Nucleophile is the Cys-58. Residue 193–198 (GTGKIG) coordinates NADP(+).

This sequence belongs to the glutamyl-tRNA reductase family. In terms of assembly, homodimer.

The enzyme catalyses (S)-4-amino-5-oxopentanoate + tRNA(Glu) + NADP(+) = L-glutamyl-tRNA(Glu) + NADPH + H(+). The protein operates within porphyrin-containing compound metabolism; protoporphyrin-IX biosynthesis; 5-aminolevulinate from L-glutamyl-tRNA(Glu): step 1/2. Its function is as follows. Catalyzes the NADPH-dependent reduction of glutamyl-tRNA(Glu) to glutamate 1-semialdehyde (GSA). This Flavobacterium johnsoniae (strain ATCC 17061 / DSM 2064 / JCM 8514 / BCRC 14874 / CCUG 350202 / NBRC 14942 / NCIMB 11054 / UW101) (Cytophaga johnsonae) protein is Glutamyl-tRNA reductase 1.